A 1005-amino-acid polypeptide reads, in one-letter code: DNA double-strand break repair Rad50 ATPase (1005 aa).

ATP-binding positions include Lys-14, 35–40, 62–64, and Gln-134; these read GSGKSS and ITK. Coiled coils occupy residues 189–230, 292–321, 346–379, and 404–498; these read KENY…IEKL, LVDEIRKIESRLRELKSHYEDYLKLTKQLE, LDTLLNKIKDEIERVETIKDLLEELKNLNEEIEK, and AVEY…LKEV. Positions 457–554 constitute a Zinc-hook domain; that stretch reads IEEKKKVLEN…DIEKLKKEID (98 aa). Zn(2+) contacts are provided by Cys-502 and Cys-505. Coiled-coil stretches lie at residues 523–600, 656–692, and 800–834; these read TQLN…YVIN, KEKCREELNKLREDEREINRLKDKLNELKNKEKELIE, and RQELDNVREQKTEIETGIEYLKKDVESLKARLKEM.

It belongs to the SMC family. RAD50 subfamily. Homodimer. Forms a heterotetramer composed of two Mre11 subunits and two Rad50 subunits. The cofactor is Zn(2+).

In terms of biological role, part of the Rad50/Mre11 complex, which is involved in the early steps of DNA double-strand break (DSB) repair. The complex may facilitate opening of the processed DNA ends to aid in the recruitment of HerA and NurA. Rad50 controls the balance between DNA end bridging and DNA resection via ATP-dependent structural rearrangements of the Rad50/Mre11 complex. The chain is DNA double-strand break repair Rad50 ATPase from Methanocaldococcus jannaschii (strain ATCC 43067 / DSM 2661 / JAL-1 / JCM 10045 / NBRC 100440) (Methanococcus jannaschii).